The primary structure comprises 528 residues: DnaJ homolog 1, mitochondrial (528 aa).

The N-terminal 66 residues, 1–66 (MFSKYLQSRV…REFSRCAALK (66 aa)), are a transit peptide targeting the mitochondrion. In terms of domain architecture, J spans 86-150 (DPYKTLGVSK…KKKKAFDTYG (65 aa)). The CR-type zinc finger occupies 227 to 308 (GAKKDLSYSV…CMGSGTVRER (82 aa)). CXXCXGXG motif repeat units follow at residues 240 to 247 (CSSCHGSG), 257 to 264 (CFACKGTG), 280 to 287 (CDSCGGTG), and 296 to 303 (CRSCMGSG). Residues 455-528 (NDSTARRTQS…QNPKKDESSS (74 aa)) form a disordered region. The span at 462-488 (TQSSPSGTNSSTSTSSTSSKHSTGIST) shows a compositional bias: low complexity. The segment covering 513-528 (LHPDEDQNPKKDESSS) has biased composition (basic and acidic residues).

The protein localises to the mitochondrion. This is DnaJ homolog 1, mitochondrial (mdj1) from Schizosaccharomyces pombe (strain 972 / ATCC 24843) (Fission yeast).